The sequence spans 367 residues: 2-aminoethylphosphonate--pyruvate transaminase (367 aa).

Lys194 bears the N6-(pyridoxal phosphate)lysine mark.

Belongs to the class-V pyridoxal-phosphate-dependent aminotransferase family. PhnW subfamily. As to quaternary structure, homodimer. Pyridoxal 5'-phosphate serves as cofactor.

The enzyme catalyses (2-aminoethyl)phosphonate + pyruvate = phosphonoacetaldehyde + L-alanine. In terms of biological role, involved in phosphonate degradation. In Salmonella dublin (strain CT_02021853), this protein is 2-aminoethylphosphonate--pyruvate transaminase.